Consider the following 196-residue polypeptide: Inner membrane protein YdjM (196 aa).

Residues 1–23 (MTAEGHLLFSIACAVFAKNAELT) lie on the Periplasmic side of the membrane. Residues 24–44 (PVLAQGDWWHIVPSAILTCLL) traverse the membrane as a helical segment. The Cytoplasmic segment spans residues 45-77 (PDIDHPKSFLGQRLKWISKPIARAFGHRGFTHS). Residues 78 to 98 (LLAVFALLATFYLKVPEGWFI) form a helical membrane-spanning segment. At 99–106 (PADALQGM) the chain is on the periplasmic side. A helical membrane pass occupies residues 107-127 (VLGYLSHILADMLTPAGVPLL). Over 128–149 (WPCRWRFRLPILVPQKGNQLER) the chain is Cytoplasmic. The chain crosses the membrane as a helical span at residues 150-170 (FICMALFVWSVWMPHSLPENS). Topologically, residues 171–196 (AVRWSSQMINTLQIQFHRLIKHQVEY) are periplasmic.

The protein to B.subtilis YvsG.

The protein localises to the cell inner membrane. The chain is Inner membrane protein YdjM (ydjM) from Escherichia coli (strain K12).